Consider the following 161-residue polypeptide: Dehydrin DHN3 (161 aa).

A compositionally biased stretch (basic and acidic residues) spans 1–12; that stretch reads MEHGHATNRVDE. The disordered stretch occupies residues 1 to 161; it reads MEHGHATNRV…KIKEKLPGQH (161 aa). Residues 20 to 38 are compositionally biased toward gly residues; it reads HGVGTGMGAHGGVGTGAAA. Low complexity-rich tracts occupy residues 93–107 and 115–130; these read DQQQ…HGHT and HGAT…QGHT. Repeat copies occupy residues 101–123 and 124–144. The tract at residues 101 to 144 is 2 X approximate tandem repeats; that stretch reads YGQHGHTGMTGTGEHGATATGGTYGQQGHTGMTGTGAHGTDGTG. Positions 131 to 142 are enriched in gly residues; the sequence is GMTGTGAHGTDG. The segment covering 143–161 has biased composition (basic and acidic residues); it reads TGEKKGIMDKIKEKLPGQH.

It belongs to the plant dehydrin family.

The protein is Dehydrin DHN3 (DHN3) of Hordeum vulgare (Barley).